We begin with the raw amino-acid sequence, 256 residues long: Autophagy protein 5 (256 aa).

Lysine 113 is covalently cross-linked (Glycyl lysine isopeptide (Lys-Gly) (interchain with G-Cter in ATG12)).

This sequence belongs to the ATG5 family. Conjugated with ATG12. Conjugated to ATG12; which is essential for autophagy.

It is found in the preautophagosomal structure membrane. Its function is as follows. Involved in cytoplasm to vacuole transport (Cvt) and autophagic vesicle formation. Autophagy is essential for maintenance of amino acid levels and protein synthesis under nitrogen starvation. Required for selective autophagic degradation of the nucleus (nucleophagy). Also required for mitophagy, which eliminates defective or superfluous mitochondria in order to fulfill cellular energy requirements and prevent excess ROS production. Conjugation with ATG12, through a ubiquitin-like conjugating system involving ATG7 as an E1-like activating enzyme and ATG10 as an E2-like conjugating enzyme, is essential for its function. The ATG12-ATG5 conjugate acts as an E3-like enzyme which is required for lipidation of ATG8 and ATG8 association to the vesicle membranes. This Yarrowia lipolytica (strain CLIB 122 / E 150) (Yeast) protein is Autophagy protein 5 (ATG5).